We begin with the raw amino-acid sequence, 369 residues long: Phospho-N-acetylmuramoyl-pentapeptide-transferase (369 aa).

The next 10 helical transmembrane spans lie at 2–22 (IALL…TPLF), 55–75 (TVVV…MFLM), 86–106 (ALIL…DDFI), 120–140 (AKLI…LNFP), 163–183 (LAFG…NLIV), 196–216 (LDGL…LMGI), 239–259 (PLDL…FLWW), 266–286 (IFMG…FAIL), 291–311 (LLLG…IIQV), and 348–368 (ILGG…WVVL).

It belongs to the glycosyltransferase 4 family. MraY subfamily. The cofactor is Mg(2+).

The protein localises to the cell membrane. It catalyses the reaction UDP-N-acetyl-alpha-D-muramoyl-L-alanyl-gamma-D-glutamyl-meso-2,6-diaminopimeloyl-D-alanyl-D-alanine + di-trans,octa-cis-undecaprenyl phosphate = di-trans,octa-cis-undecaprenyl diphospho-N-acetyl-alpha-D-muramoyl-L-alanyl-D-glutamyl-meso-2,6-diaminopimeloyl-D-alanyl-D-alanine + UMP. It functions in the pathway cell wall biogenesis; peptidoglycan biosynthesis. Functionally, catalyzes the initial step of the lipid cycle reactions in the biosynthesis of the cell wall peptidoglycan: transfers peptidoglycan precursor phospho-MurNAc-pentapeptide from UDP-MurNAc-pentapeptide onto the lipid carrier undecaprenyl phosphate, yielding undecaprenyl-pyrophosphoryl-MurNAc-pentapeptide, known as lipid I. The protein is Phospho-N-acetylmuramoyl-pentapeptide-transferase of Pseudarthrobacter chlorophenolicus (strain ATCC 700700 / DSM 12829 / CIP 107037 / JCM 12360 / KCTC 9906 / NCIMB 13794 / A6) (Arthrobacter chlorophenolicus).